We begin with the raw amino-acid sequence, 396 residues long: Elongation factor Tu 2 (396 aa).

Residues K10 to E206 enclose the tr-type G domain. A G1 region spans residues G19 to T26. Residue G19 to T26 coordinates GTP. Position 26 (T26) interacts with Mg(2+). Positions G60 to A64 are G2. The interval D81–G84 is G3. GTP-binding positions include D81–H85 and N136–D139. The tract at residues N136–D139 is G4. A G5 region spans residues S174–L176.

This sequence belongs to the TRAFAC class translation factor GTPase superfamily. Classic translation factor GTPase family. EF-Tu/EF-1A subfamily. In terms of assembly, monomer.

Its subcellular location is the cytoplasm. The catalysed reaction is GTP + H2O = GDP + phosphate + H(+). In terms of biological role, GTP hydrolase that promotes the GTP-dependent binding of aminoacyl-tRNA to the A-site of ribosomes during protein biosynthesis. The protein is Elongation factor Tu 2 of Halorhodospira halophila (strain DSM 244 / SL1) (Ectothiorhodospira halophila (strain DSM 244 / SL1)).